Reading from the N-terminus, the 299-residue chain is Probable lipid kinase YegS (299 aa).

The 132-residue stretch at 2-133 folds into the DAGKc domain; that stretch reads ANFPASLLIL…IDMARVNDKT (132 aa). ATP contacts are provided by residues Thr40, 66–72, and Thr95; that span reads GDGTINE. Residues Leu215, Asp218, and Leu220 each coordinate Mg(2+). Glu271 serves as the catalytic Proton acceptor.

This sequence belongs to the diacylglycerol/lipid kinase family. YegS lipid kinase subfamily. The cofactor is Mg(2+). Ca(2+) serves as cofactor.

The protein resides in the cytoplasm. Functionally, probably phosphorylates lipids; the in vivo substrate is unknown. This is Probable lipid kinase YegS from Salmonella paratyphi A (strain ATCC 9150 / SARB42).